A 187-amino-acid polypeptide reads, in one-letter code: Calcium and integrin-binding family member 2 (187 aa).

EF-hand domains are found at residues 66 to 101 (RENP…LCES), 103 to 138 (PREL…LTKS), and 144 to 179 (EVVL…APDF). 9 residues coordinate Ca(2+): D116, N118, D120, D127, D157, D159, D161, K163, and D168.

In terms of assembly, monomer. Homodimer. Interacts with WHRN and MYO7A. Interacts with ITGA2B (via C-terminus cytoplasmic tail region); the interactions are stabilized/increased in a calcium and magnesium-dependent manner. Interacts with ITGA7 (via C-terminus cytoplasmic tail region); the interactions are stabilized/increased in a calcium and magnesium-dependent manner. Interacts with TMC1. Interacts with TMC2.

It is found in the cytoplasm. The protein resides in the cell projection. It localises to the stereocilium. The protein localises to the photoreceptor inner segment. Its subcellular location is the cilium. It is found in the photoreceptor outer segment. The protein resides in the cell membrane. It localises to the sarcolemma. Its function is as follows. Calcium- and integrin-binding protein that plays a role in intracellular calcium homeostasis. Acts as an auxiliary subunit of the sensory mechanoelectrical transduction (MET) channel in hair cells. Essential for mechanoelectrical transduction (MET) currents in auditory hair cells and thereby required for hearing. Regulates the function of hair cell mechanotransduction by controlling the distribution of transmembrane channel-like proteins TMC1 and TMC2, and by regulating the function of the MET channels in hair cells. Required for the maintenance of auditory hair cell stereocilia bundle morphology and function and for hair-cell survival in the cochlea. Critical for proper photoreceptor cell maintenance and function. Plays a role in intracellular calcium homeostasis by decreasing ATP-induced calcium release. The sequence is that of Calcium and integrin-binding family member 2 (Cib2) from Rattus norvegicus (Rat).